A 432-amino-acid polypeptide reads, in one-letter code: Glutamate-1-semialdehyde 2,1-aminomutase (432 aa).

Lysine 269 carries the post-translational modification N6-(pyridoxal phosphate)lysine.

Belongs to the class-III pyridoxal-phosphate-dependent aminotransferase family. HemL subfamily. In terms of assembly, homodimer. It depends on pyridoxal 5'-phosphate as a cofactor.

The protein resides in the cytoplasm. The catalysed reaction is (S)-4-amino-5-oxopentanoate = 5-aminolevulinate. Its pathway is porphyrin-containing compound metabolism; protoporphyrin-IX biosynthesis; 5-aminolevulinate from L-glutamyl-tRNA(Glu): step 2/2. This chain is Glutamate-1-semialdehyde 2,1-aminomutase, found in Desulforamulus reducens (strain ATCC BAA-1160 / DSM 100696 / MI-1) (Desulfotomaculum reducens).